The following is a 600-amino-acid chain: Repressor of filamentous growth 1 (600 aa).

Positions 1–14 are enriched in polar residues; that stretch reads MSTAIYYSTHNNMH. Disordered regions lie at residues 1–59, 112–160, 180–200, 266–337, 427–549, and 564–600; these read MSTA…NSAN, NGGY…TDIS, GIDGNFSHNNNNNNNNNNNNN, AEEE…SRDN, STTS…GYDN, and QQGLQVQQQGQHYNSGLHAAQHYQQQQQQHHQQQPPQ. 2 stretches are compositionally biased toward low complexity: residues 20-39 and 47-59; these read TNGSGSTTSGNPGANPSNPN and INNNSNIGLNSAN. The segment covering 131-160 has biased composition (polar residues); the sequence is FDTSYSNQTTPTSAYTNFNNDSTHSPTDIS. Residues 188–200 are compositionally biased toward low complexity; the sequence is NNNNNNNNNNNNN. A DNA-binding region (HMG box) is located at residues 212 to 281; that stretch reads IPRPRNAFIL…NHAKKYPGYR (70 aa). Basic residues predominate over residues 272 to 289; the sequence is NHAKKYPGYRYTPRRNGR. The span at 297–312 shows a compositional bias: low complexity; sequence KNKPLPNNKSNSISGM. Over residues 313–322 the composition is skewed to gly residues; it reads SGSGGGGGSI. Low complexity predominate over residues 427 to 470; it reads STTSTTAPTTTTTTTTNASSIGLSVPPTATTTSTSSQPTSANSQ. The segment covering 481–496 has biased composition (polar residues); the sequence is PVSSTHHQSSISEIAA. Residues 497-506 are compositionally biased toward low complexity; sequence QQQQQQQQQQ. The segment covering 507–547 has biased composition (polar residues); the sequence is FMYNTNYSTIPPNNTTTMQQHSAGTGNDYSLNGNNSGNTGY. 2 stretches are compositionally biased toward low complexity: residues 564–574 and 581–600; these read QQGLQVQQQGQ and HAAQHYQQQQQQHHQQQPPQ.

The protein localises to the nucleus. Functionally, transcription regulator that functions in both the positive and negative regulation of filamentous growth, depending upon the environmental conditions. Recruits the TUP1/SSN6 general repression complex to achieve repression. Regulates genes encoding cell wall components that are specifically expressed in the filamentous forms such as HWP1, RBT1, HYR1, ECE1, ALS1, RBT4 and RBT5. The polypeptide is Repressor of filamentous growth 1 (RFG1) (Candida albicans (strain SC5314 / ATCC MYA-2876) (Yeast)).